A 272-amino-acid chain; its full sequence is Protein UL24 homolog (272 aa).

Belongs to the herpesviridae UL24 family.

It is found in the virion. The protein resides in the host cytoplasm. The protein localises to the host nucleus. Its subcellular location is the host nucleolus. It localises to the host Golgi apparatus. May participate in nuclear egress of viral particles. Plays a role in the dispersal of several host nucleolar proteins including NCL/nucleolin and NPM1. Since deletion of host NCL/nucleolin negatively impact on nuclear egress, UL24 supposedly acts on this process through its effect on host nucleoli. In Equine herpesvirus 1 (strain V592) (EHV-1), this protein is Protein UL24 homolog.